The chain runs to 441 residues: Ribulose bisphosphate carboxylase/oxygenase activase, chloroplastic (441 aa).

ATP is bound at residue 167-174 (VWGGKGQG).

It belongs to the RuBisCO activase family.

It is found in the plastid. It localises to the chloroplast stroma. In terms of biological role, activation of RuBisCO (ribulose-1,5-bisphosphate carboxylase/oxygenase; EC 4.1.1.39) involves the ATP-dependent carboxylation of the epsilon-amino group of lysine leading to a carbamate structure. This chain is Ribulose bisphosphate carboxylase/oxygenase activase, chloroplastic (RCA1), found in Phaseolus vulgaris (Kidney bean).